The following is a 309-amino-acid chain: Methionyl-tRNA formyltransferase (309 aa).

(6S)-5,6,7,8-tetrahydrofolate is bound at residue 109-112 (SLLP).

This sequence belongs to the Fmt family.

The enzyme catalyses L-methionyl-tRNA(fMet) + (6R)-10-formyltetrahydrofolate = N-formyl-L-methionyl-tRNA(fMet) + (6S)-5,6,7,8-tetrahydrofolate + H(+). Functionally, attaches a formyl group to the free amino group of methionyl-tRNA(fMet). The formyl group appears to play a dual role in the initiator identity of N-formylmethionyl-tRNA by promoting its recognition by IF2 and preventing the misappropriation of this tRNA by the elongation apparatus. In Clostridium perfringens (strain SM101 / Type A), this protein is Methionyl-tRNA formyltransferase.